Here is a 236-residue protein sequence, read N- to C-terminus: 3-deoxy-D-manno-octulosonic acid kinase (236 aa).

The active site involves Asp167.

It belongs to the protein kinase superfamily. KdkA/RfaP family.

It localises to the cell inner membrane. It carries out the reaction an alpha-Kdo-(2-&gt;6)-lipid IVA + ATP = a 4-O-phospho-alpha-Kdo-(2-&gt;6)-lipid IVA + ADP + H(+). The protein operates within bacterial outer membrane biogenesis; LPS core biosynthesis. Catalyzes the ATP-dependent phosphorylation of the 3-deoxy-D-manno-octulosonic acid (Kdo) residue in Kdo-lipid IV(A) at the 4-OH position. The polypeptide is 3-deoxy-D-manno-octulosonic acid kinase (Vibrio vulnificus (strain YJ016)).